A 131-amino-acid chain; its full sequence is Glycine cleavage system H protein (131 aa).

The 83-residue stretch at 24–106 (TLRVGITDYA…YGEGWLVDLQ (83 aa)) folds into the Lipoyl-binding domain. N6-lipoyllysine is present on Lys65.

This sequence belongs to the GcvH family. The glycine cleavage system is composed of four proteins: P, T, L and H. (R)-lipoate serves as cofactor.

In terms of biological role, the glycine cleavage system catalyzes the degradation of glycine. The H protein shuttles the methylamine group of glycine from the P protein to the T protein. This is Glycine cleavage system H protein from Mycobacterium sp. (strain JLS).